Reading from the N-terminus, the 379-residue chain is Cytochrome b (379 aa).

4 consecutive transmembrane segments (helical) span residues 33–53 (FGSL…FLAM), 77–98 (WLIR…FIHV), 113–133 (WNIG…GYVL), and 178–198 (FFAF…VHLL). 2 residues coordinate heme b: H83 and H97. Residues H182 and H196 each coordinate heme b. H201 lines the a ubiquinone pocket. The next 4 helical transmembrane spans lie at 226 to 246 (TKDL…ALFF), 288 to 308 (LGGV…PLLN), 320 to 340 (VTQI…WIGG), and 347 to 367 (FTTI…ILIP).

This sequence belongs to the cytochrome b family. In terms of assembly, the cytochrome bc1 complex contains 11 subunits: 3 respiratory subunits (MT-CYB, CYC1 and UQCRFS1), 2 core proteins (UQCRC1 and UQCRC2) and 6 low-molecular weight proteins (UQCRH/QCR6, UQCRB/QCR7, UQCRQ/QCR8, UQCR10/QCR9, UQCR11/QCR10 and a cleavage product of UQCRFS1). This cytochrome bc1 complex then forms a dimer. It depends on heme b as a cofactor.

The protein resides in the mitochondrion inner membrane. In terms of biological role, component of the ubiquinol-cytochrome c reductase complex (complex III or cytochrome b-c1 complex) that is part of the mitochondrial respiratory chain. The b-c1 complex mediates electron transfer from ubiquinol to cytochrome c. Contributes to the generation of a proton gradient across the mitochondrial membrane that is then used for ATP synthesis. The polypeptide is Cytochrome b (MT-CYB) (Akodon reigi (Reig's grass mouse)).